We begin with the raw amino-acid sequence, 228 residues long: Non-specific lipid-transfer protein EPAD1 (228 aa).

Residues 1–24 (MERSHLAVLLGLLAFAAGVPAAAA) form the signal peptide. 3 disulfide bridges follow: Cys-40–Cys-62, Cys-63–Cys-105, and Cys-78–Cys-119. An N-linked (GlcNAc...) asparagine glycan is attached at Asn-94. Residues 124–207 (PPASIVTAPP…PPRSGASSSL (84 aa)) are disordered. Residues 145 to 162 (REAPPPPPAAEKLSPPPQ) show a composition bias toward pro residues.

The protein belongs to the plant LTP family. Expressed in young panicles. Specifically expressed in pollen mother cells and young microspores.

The protein resides in the cell membrane. In terms of biological role, plant non-specific lipid-transfer protein that binds phospholipids in vitro. Required for correct pollen exine patterning by controlling the continuity and homogeneity of the primexine distribution. This is Non-specific lipid-transfer protein EPAD1 from Oryza sativa subsp. japonica (Rice).